Consider the following 239-residue polypeptide: UPF0641 membrane protein YHR140W (239 aa).

Residues methionine 1–threonine 11 lie on the Cytoplasmic side of the membrane. A helical transmembrane segment spans residues leucine 12–serine 31. The Lumenal portion of the chain corresponds to valine 32–glutamine 45. A helical membrane pass occupies residues phenylalanine 46–tyrosine 66. Residues tyrosine 67 to serine 99 are Cytoplasmic-facing. The chain crosses the membrane as a helical span at residues isoleucine 100–valine 120. The Lumenal segment spans residues glutamate 121–lysine 125. The helical transmembrane segment at threonine 126–alanine 146 threads the bilayer. The Cytoplasmic segment spans residues aspartate 147–lysine 162. The chain crosses the membrane as a helical span at residues histidine 163 to isoleucine 183. Topologically, residues aspartate 184–serine 204 are lumenal. A helical transmembrane segment spans residues isoleucine 205–proline 225. Topologically, residues proline 226–asparagine 239 are cytoplasmic.

Belongs to the UPF0641 family.

It is found in the endoplasmic reticulum membrane. This Saccharomyces cerevisiae (strain ATCC 204508 / S288c) (Baker's yeast) protein is UPF0641 membrane protein YHR140W.